We begin with the raw amino-acid sequence, 139 residues long: Plasmid stability protein StbB (139 aa).

One can recognise a PINc domain in the interval 2–136 (ILLDTNVISE…EAAGLNVINP (135 aa)). Residues Asp-5 and Asp-104 each contribute to the Mg(2+) site.

It belongs to the PINc/VapC protein family. The cofactor is Mg(2+).

Toxic component of a type II toxin-antitoxin (TA) system. An RNase. Involved in plasmid stability. This is Plasmid stability protein StbB (stbB) from Pseudomonas syringae pv. tomato (strain ATCC BAA-871 / DC3000).